The sequence spans 397 residues: CCA-adding enzyme (397 aa).

ATP-binding residues include Gly8 and Arg11. The CTP site is built by Gly8 and Arg11. Mg(2+)-binding residues include Glu21 and Asp23. ATP is bound by residues Arg91, Arg137, and Arg140. CTP contacts are provided by Arg91, Arg137, and Arg140. Residues 213–324 (NLDAAIATLK…LALFNGCDAW (112 aa)) enclose the HD domain.

The protein belongs to the tRNA nucleotidyltransferase/poly(A) polymerase family. Bacterial CCA-adding enzyme type 2 subfamily. It depends on Mg(2+) as a cofactor.

It carries out the reaction a tRNA precursor + 2 CTP + ATP = a tRNA with a 3' CCA end + 3 diphosphate. The catalysed reaction is a tRNA with a 3' CCA end + 2 CTP + ATP = a tRNA with a 3' CCACCA end + 3 diphosphate. Functionally, catalyzes the addition and repair of the essential 3'-terminal CCA sequence in tRNAs without using a nucleic acid template. Adds these three nucleotides in the order of C, C, and A to the tRNA nucleotide-73, using CTP and ATP as substrates and producing inorganic pyrophosphate. tRNA 3'-terminal CCA addition is required both for tRNA processing and repair. Also involved in tRNA surveillance by mediating tandem CCA addition to generate a CCACCA at the 3' terminus of unstable tRNAs. While stable tRNAs receive only 3'-terminal CCA, unstable tRNAs are marked with CCACCA and rapidly degraded. The protein is CCA-adding enzyme of Alteromonas mediterranea (strain DSM 17117 / CIP 110805 / LMG 28347 / Deep ecotype).